The primary structure comprises 182 residues: Bifunctional protein PyrR (182 aa).

The PRPP-binding motif lies at 98-110 (VVLVDDVLFTGRS).

The protein belongs to the purine/pyrimidine phosphoribosyltransferase family. PyrR subfamily.

The catalysed reaction is UMP + diphosphate = 5-phospho-alpha-D-ribose 1-diphosphate + uracil. Functionally, regulates the transcription of the pyrimidine nucleotide (pyr) operon in response to exogenous pyrimidines. Also displays a weak uracil phosphoribosyltransferase activity which is not physiologically significant. The polypeptide is Bifunctional protein PyrR (Dehalococcoides mccartyi (strain ATCC BAA-2100 / JCM 16839 / KCTC 5957 / BAV1)).